Reading from the N-terminus, the 203-residue chain is V-type ATP synthase subunit D (203 aa).

The protein belongs to the V-ATPase D subunit family.

Its function is as follows. Produces ATP from ADP in the presence of a proton gradient across the membrane. This is V-type ATP synthase subunit D from Streptococcus pneumoniae (strain CGSP14).